A 387-amino-acid polypeptide reads, in one-letter code: Large ribosomal subunit protein uL3 (387 aa).

Belongs to the universal ribosomal protein uL3 family.

Its subcellular location is the cytoplasm. The polypeptide is Large ribosomal subunit protein uL3 (RPL3) (Candida glabrata (strain ATCC 2001 / BCRC 20586 / JCM 3761 / NBRC 0622 / NRRL Y-65 / CBS 138) (Yeast)).